The primary structure comprises 218 residues: Adenylate kinase (218 aa).

ATP is bound at residue glycine 10–threonine 15. Residues serine 30–valine 59 are NMP. Residues threonine 31, arginine 36, glycine 57–valine 59, glycine 85–arginine 88, and glutamine 92 contribute to the AMP site. The interval glycine 122–aspartate 159 is LID. Residues arginine 123 and serine 132 to tyrosine 133 contribute to the ATP site. AMP contacts are provided by arginine 156 and arginine 167. Glycine 203 lines the ATP pocket.

The protein belongs to the adenylate kinase family. Monomer.

The protein localises to the cytoplasm. The enzyme catalyses AMP + ATP = 2 ADP. The protein operates within purine metabolism; AMP biosynthesis via salvage pathway; AMP from ADP: step 1/1. Catalyzes the reversible transfer of the terminal phosphate group between ATP and AMP. Plays an important role in cellular energy homeostasis and in adenine nucleotide metabolism. The sequence is that of Adenylate kinase from Bordetella bronchiseptica (strain ATCC BAA-588 / NCTC 13252 / RB50) (Alcaligenes bronchisepticus).